The following is a 284-amino-acid chain: Ribosomal RNA small subunit methyltransferase A (284 aa).

Residues Asn-22, Leu-24, Gly-49, Glu-70, Asp-97, and Asn-117 each contribute to the S-adenosyl-L-methionine site.

This sequence belongs to the class I-like SAM-binding methyltransferase superfamily. rRNA adenine N(6)-methyltransferase family. RsmA subfamily.

The protein resides in the cytoplasm. It catalyses the reaction adenosine(1518)/adenosine(1519) in 16S rRNA + 4 S-adenosyl-L-methionine = N(6)-dimethyladenosine(1518)/N(6)-dimethyladenosine(1519) in 16S rRNA + 4 S-adenosyl-L-homocysteine + 4 H(+). In terms of biological role, specifically dimethylates two adjacent adenosines (A1518 and A1519) in the loop of a conserved hairpin near the 3'-end of 16S rRNA in the 30S particle. May play a critical role in biogenesis of 30S subunits. This Desulforapulum autotrophicum (strain ATCC 43914 / DSM 3382 / VKM B-1955 / HRM2) (Desulfobacterium autotrophicum) protein is Ribosomal RNA small subunit methyltransferase A.